A 432-amino-acid chain; its full sequence is Adenylosuccinate synthetase (432 aa).

GTP-binding positions include 12 to 18 (GDEGKGK) and 40 to 42 (GHT). Aspartate 13 acts as the Proton acceptor in catalysis. 2 residues coordinate Mg(2+): aspartate 13 and glycine 40. IMP-binding positions include 13-16 (DEGK), 38-41 (NAGH), threonine 133, arginine 147, glutamine 228, threonine 243, and arginine 307. Histidine 41 functions as the Proton donor in the catalytic mechanism. 303–309 (TTTGRPR) contributes to the substrate binding site. Residues arginine 309, 335–337 (KLD), and 417–419 (GVG) contribute to the GTP site.

This sequence belongs to the adenylosuccinate synthetase family. As to quaternary structure, homodimer. Mg(2+) serves as cofactor.

Its subcellular location is the cytoplasm. The catalysed reaction is IMP + L-aspartate + GTP = N(6)-(1,2-dicarboxyethyl)-AMP + GDP + phosphate + 2 H(+). The protein operates within purine metabolism; AMP biosynthesis via de novo pathway; AMP from IMP: step 1/2. Plays an important role in the de novo pathway of purine nucleotide biosynthesis. Catalyzes the first committed step in the biosynthesis of AMP from IMP. This is Adenylosuccinate synthetase from Nocardioides sp. (strain ATCC BAA-499 / JS614).